The chain runs to 206 residues: UPF0502 protein Acid_1185 (206 aa).

The protein belongs to the UPF0502 family.

In Solibacter usitatus (strain Ellin6076), this protein is UPF0502 protein Acid_1185.